The following is a 1192-amino-acid chain: Pyruvate carboxylase (1192 aa).

The tract at residues Met1–Gln23 is disordered. The region spanning Gln40–Glu492 is the Biotin carboxylation domain. ATP-binding residues include Lys158, Glu242, and His277. The ATP-grasp domain maps to Arg162–Ala359. Arg334 is an active-site residue. The Pyruvate carboxyltransferase domain maps to Cys578–Arg846. Residues Arg586–Gln590 and Arg659 each bind substrate. Asp587 provides a ligand contact to a divalent metal cation. A divalent metal cation contacts are provided by Lys755, His785, and His787. Lys755 is modified (N6-carboxylysine). Thr920 contributes to the substrate binding site. The Biotinyl-binding domain maps to Lys1115–Val1190. Lys1156 is subject to N6-biotinyllysine.

It depends on biotin as a cofactor. Requires Zn(2+) as cofactor.

It is found in the cytoplasm. It catalyses the reaction hydrogencarbonate + pyruvate + ATP = oxaloacetate + ADP + phosphate + H(+). It functions in the pathway carbohydrate biosynthesis; gluconeogenesis. In terms of biological role, pyruvate carboxylase catalyzes a 2-step reaction, involving the ATP-dependent carboxylation of the covalently attached biotin in the first step and the transfer of the carboxyl group to pyruvate in the second. This is Pyruvate carboxylase (pyc) from Aspergillus niger.